The chain runs to 200 residues: Synaptobrevin homolog YKT6 (200 aa).

Residues 7 to 129 (GVFRSGGEKA…LKMKQLDTYI (123 aa)) form the Longin domain. The 61-residue stretch at 140–200 (AIMKVQQELD…KKSNSCCIIM (61 aa)) folds into the v-SNARE coiled-coil homology domain. Threonine 158 carries the post-translational modification Phosphothreonine. A lipid anchor (S-palmitoyl cysteine) is attached at cysteine 196. Cysteine 197 is subject to Cysteine methyl ester. Cysteine 197 carries the S-farnesyl cysteine lipid modification. Residues 198–200 (IIM) constitute a propeptide, removed in mature form.

This sequence belongs to the synaptobrevin family.

The protein resides in the cell membrane. This is Synaptobrevin homolog YKT6 (YKT6) from Saccharomyces cerevisiae (strain ATCC 204508 / S288c) (Baker's yeast).